The sequence spans 100 residues: Large ribosomal subunit protein uL23 (100 aa).

The protein belongs to the universal ribosomal protein uL23 family. As to quaternary structure, part of the 50S ribosomal subunit. Contacts protein L29, and trigger factor when it is bound to the ribosome.

Its function is as follows. One of the early assembly proteins it binds 23S rRNA. One of the proteins that surrounds the polypeptide exit tunnel on the outside of the ribosome. Forms the main docking site for trigger factor binding to the ribosome. This chain is Large ribosomal subunit protein uL23, found in Sodalis glossinidius (strain morsitans).